Consider the following 240-residue polypeptide: Alkaline phosphatase synthesis transcriptional regulatory protein PhoP (240 aa).

Residues lysine 4–leucine 118 enclose the Response regulatory domain. The residue at position 53 (aspartate 53) is a 4-aspartylphosphate. Residues glutamate 136–glutamate 235 constitute a DNA-binding region (ompR/PhoB-type).

Phosphorylated by PhoR.

It localises to the cytoplasm. Its function is as follows. Member of the two-component regulatory system PhoP/PhoR involved in the regulation of alkaline phosphatase genes phoA and phoB and of phosphodiesterase. The chain is Alkaline phosphatase synthesis transcriptional regulatory protein PhoP (phoP) from Bacillus subtilis (strain 168).